We begin with the raw amino-acid sequence, 113 residues long: T cell receptor alpha variable 5 (113 aa).

The signal sequence occupies residues 1 to 22 (MKTFAGFSFLFLWLQLDCMSRG). Residues 23-113 (EDVEQSLFLS…DSAIYFCAES (91 aa)) form the Ig-like domain. N42 carries N-linked (GlcNAc...) asparagine glycosylation. The cysteines at positions 43 and 110 are disulfide-linked.

Alpha-beta TR is a heterodimer composed of an alpha and beta chain; disulfide-linked. The alpha-beta TR is associated with the transmembrane signaling CD3 coreceptor proteins to form the TR-CD3 (TcR or TCR). The assembly of alpha-beta TR heterodimers with CD3 occurs in the endoplasmic reticulum where a single alpha-beta TR heterodimer associates with one CD3D-CD3E heterodimer, one CD3G-CD3E heterodimer and one CD247 homodimer forming a stable octameric structure. CD3D-CD3E and CD3G-CD3E heterodimers preferentially associate with TR alpha and TR beta chains, respectively. The association of the CD247 homodimer is the last step of TcR assembly in the endoplasmic reticulum and is required for transport to the cell surface.

The protein localises to the cell membrane. Its function is as follows. V region of the variable domain of T cell receptor (TR) alpha chain that participates in the antigen recognition. Alpha-beta T cell receptors are antigen specific receptors which are essential to the immune response and are present on the cell surface of T lymphocytes. Recognize peptide-major histocompatibility (MH) (pMH) complexes that are displayed by antigen presenting cells (APC), a prerequisite for efficient T cell adaptive immunity against pathogens. Binding of alpha-beta TR to pMH complex initiates TR-CD3 clustering on the cell surface and intracellular activation of LCK that phosphorylates the ITAM motifs of CD3G, CD3D, CD3E and CD247 enabling the recruitment of ZAP70. In turn ZAP70 phosphorylates LAT, which recruits numerous signaling molecules to form the LAT signalosome. The LAT signalosome propagates signal branching to three major signaling pathways, the calcium, the mitogen-activated protein kinase (MAPK) kinase and the nuclear factor NF-kappa-B (NF-kB) pathways, leading to the mobilization of transcription factors that are critical for gene expression and essential for T cell growth and differentiation. The T cell repertoire is generated in the thymus, by V-(D)-J rearrangement. This repertoire is then shaped by intrathymic selection events to generate a peripheral T cell pool of self-MH restricted, non-autoaggressive T cells. Post-thymic interaction of alpha-beta TR with the pMH complexes shapes TR structural and functional avidity. The polypeptide is T cell receptor alpha variable 5 (Homo sapiens (Human)).